Here is an 83-residue protein sequence, read N- to C-terminus: Small integral membrane protein 22 (83 aa).

The chain crosses the membrane as a helical span at residues 32 to 52 (VAFIVFLTFMGTVLLLLLLVV). Positions 60 to 83 (SPGPRRESPRKERPKGVDNLALEP) are disordered. Residues 63–75 (PRRESPRKERPKG) show a composition bias toward basic and acidic residues.

In terms of assembly, interacts with CANX and DDOST. Interacts with SQLE; this interaction modulates lipid droplet formation.

It localises to the membrane. It is found in the late endosome. In terms of biological role, may modulate lipid droplet formation throught interaction with SQLE. In Homo sapiens (Human), this protein is Small integral membrane protein 22.